The chain runs to 835 residues: Envelope glycoprotein gp160 (835 aa).

An N-terminal signal peptide occupies residues 1–25 (MKVTEMQKNWLICCLLIGLIKIIGS). At 26–656 (ELWVTVYYGV…ITKWLWYIKI (631 aa)) the chain is on the extracellular side. A disulfide bridge links Cys47 with Cys67. Residues Asn81, Asn131, Asn135, Asn144, Asn148, Asn175, Asn176, Asn180, Asn190, Asn227, Asn234, Asn255, Asn267, Asn278, Asn284, Asn290, Asn322, Asn330, and Asn342 are each glycosylated (N-linked (GlcNAc...) asparagine; by host). Intrachain disulfides connect Cys112/Cys198, Cys119/Cys189, Cys124/Cys145, Cys211/Cys240, and Cys221/Cys232. The tract at residues 124 to 144 (CSSWRSVNNSVNQTNHVQMQN) is V1. The tract at residues 145–189 (CSFNVTTELRDKKKQVYSLFYMGDIIPLDTNNSSGNNSQYRLINC) is V2. The V3 stretch occupies residues 285 to 318 (CTRPGNKTRGQVQIGPGMTFYNIENIIGDTRQAY). Cys285 and Cys319 are disulfide-bonded. The CD4-binding loop stretch occupies residues 348 to 358 (NPGGDLEVTNL). Intrachain disulfides connect Cys362–Cys417 and Cys369–Cys390. Residues 369–390 (CNTSQLFTNQNGNTTGNITLQC) form a V4 region. Residues Asn370, Asn381, Asn385, and Asn420 are each glycosylated (N-linked (GlcNAc...) asparagine; by host). Positions 433–441 (TEKYTIYPT) are V5. The tract at residues 482–503 (AAFGLGALFLGFLGAAGSTMGA) is fusion peptide. The tract at residues 545–563 (KQLQARVLAIERYLRDQQI) is immunosuppression. Cys569 and Cys575 form a disulfide bridge. Asn582, Asn588, Asn597, and Asn609 each carry an N-linked (GlcNAc...) asparagine; by host glycan. Residues 605–639 (EQVRNYSGVIFGLLEQAQEQQSINEKSLLELDQWS) are a coiled coil. Positions 634–655 (ELDQWSSLWNWFDITKWLWYIK) are MPER; binding to GalCer. The chain crosses the membrane as a helical span at residues 657-677 (FIMVVAGIVGIRIISIIMSMV). Residues 678 to 835 (ARVRQGYSPL…IRQGLERALL (158 aa)) are Cytoplasmic-facing. A YXXL motif; contains endocytosis signal motif is present at residues 684 to 687 (YSPL). The Di-leucine internalization motif signature appears at 834-835 (LL).

It belongs to the HIV-1 env protein family. In terms of assembly, the mature envelope protein (Env) consists of a homotrimer of non-covalently associated gp120-gp41 heterodimers. The resulting complex protrudes from the virus surface as a spike. There seems to be as few as 10 spikes on the average virion. Interacts with host CD4, CCR5 and CXCR4. Gp120 also interacts with the C-type lectins CD209/DC-SIGN and CLEC4M/DC-SIGNR (collectively referred to as DC-SIGN(R)). Gp120 and gp41 interact with GalCer. Gp120 interacts with host ITGA4/ITGB7 complex; on CD4+ T-cells, this interaction results in rapid activation of integrin ITGAL/LFA-1, which facilitates efficient cell-to-cell spreading of HIV-1. Gp120 interacts with cell-associated heparan sulfate; this interaction increases virus infectivity on permissive cells and may be involved in infection of CD4- cells. The mature envelope protein (Env) consists of a homotrimer of non-covalently associated gp120-gp41 heterodimers. The resulting complex protrudes from the virus surface as a spike. There seems to be as few as 10 spikes on the average virion. Highly glycosylated by host. The high number of glycan on the protein is reffered to as 'glycan shield' because it contributes to hide protein sequence from adaptive immune system. In terms of processing, palmitoylation of the transmembrane protein and of Env polyprotein (prior to its proteolytic cleavage) is essential for their association with host cell membrane lipid rafts. Palmitoylation is therefore required for envelope trafficking to classical lipid rafts, but not for viral replication. Post-translationally, specific enzymatic cleavages in vivo yield mature proteins. Envelope glycoproteins are synthesized as an inactive precursor that is heavily N-glycosylated and processed likely by host cell furin in the Golgi to yield the mature SU and TM proteins. The cleavage site between SU and TM requires the minimal sequence [KR]-X-[KR]-R. About 2 of the 9 disulfide bonds of gp41 are reduced by P4HB/PDI, following binding to CD4 receptor.

Its subcellular location is the virion membrane. The protein resides in the host cell membrane. The protein localises to the host endosome membrane. Functionally, attaches the virus to the host lymphoid cell by binding to the primary receptor CD4. This interaction induces a structural rearrangement creating a high affinity binding site for a chemokine coreceptor like CXCR4 and/or CCR5. Acts as a ligand for CD209/DC-SIGN and CLEC4M/DC-SIGNR, which are respectively found on dendritic cells (DCs), and on endothelial cells of liver sinusoids and lymph node sinuses. These interactions allow capture of viral particles at mucosal surfaces by these cells and subsequent transmission to permissive cells. HIV subverts the migration properties of dendritic cells to gain access to CD4+ T-cells in lymph nodes. Virus transmission to permissive T-cells occurs either in trans (without DCs infection, through viral capture and transmission), or in cis (following DCs productive infection, through the usual CD4-gp120 interaction), thereby inducing a robust infection. In trans infection, bound virions remain infectious over days and it is proposed that they are not degraded, but protected in non-lysosomal acidic organelles within the DCs close to the cell membrane thus contributing to the viral infectious potential during DCs' migration from the periphery to the lymphoid tissues. On arrival at lymphoid tissues, intact virions recycle back to DCs' cell surface allowing virus transmission to CD4+ T-cells. Its function is as follows. Acts as a class I viral fusion protein. Under the current model, the protein has at least 3 conformational states: pre-fusion native state, pre-hairpin intermediate state, and post-fusion hairpin state. During fusion of viral and target intracellular membranes, the coiled coil regions (heptad repeats) assume a trimer-of-hairpins structure, positioning the fusion peptide in close proximity to the C-terminal region of the ectodomain. The formation of this structure appears to drive apposition and subsequent fusion of viral and target cell membranes. Complete fusion occurs in host cell endosomes and is dynamin-dependent, however some lipid transfer might occur at the plasma membrane. The virus undergoes clathrin-dependent internalization long before endosomal fusion, thus minimizing the surface exposure of conserved viral epitopes during fusion and reducing the efficacy of inhibitors targeting these epitopes. Membranes fusion leads to delivery of the nucleocapsid into the cytoplasm. In terms of biological role, oligomerizes in the host endoplasmic reticulum into predominantly trimers. In a second time, gp160 transits in the host Golgi, where glycosylation is completed. The precursor is then proteolytically cleaved in the trans-Golgi and thereby activated by cellular furin or furin-like proteases to produce gp120 and gp41. The protein is Envelope glycoprotein gp160 of Pan troglodytes (Chimpanzee).